A 375-amino-acid chain; its full sequence is L-asparaginase 2 (375 aa).

The first 19 residues, 1 to 19, serve as a signal peptide directing secretion; sequence MKKQRMLVLFTALLFVFTG. Residues 22 to 46 form a disordered region; that stretch reads HSPETKESPKEKAQTQKVSSASASE. Positions 24 to 35 are enriched in basic and acidic residues; the sequence is PETKESPKEKAQ. Residues 51–375 enclose the Asparaginase/glutaminase domain; that stretch reads PNIRILATGG…QKIQAYFNEY (325 aa). T61 acts as the O-isoaspartyl threonine intermediate in catalysis. Substrate contacts are provided by residues S108 and 141 to 142; that span reads TD.

Belongs to the asparaginase 1 family. Homotetramer.

It catalyses the reaction L-asparagine + H2O = L-aspartate + NH4(+). Catalyzes the conversion of L-asparagine to L-aspartate and ammonium. This is L-asparaginase 2 (ansZ) from Bacillus subtilis (strain 168).